We begin with the raw amino-acid sequence, 199 residues long: UPF0056 membrane protein bbp_399 (199 aa).

6 consecutive transmembrane segments (helical) span residues 7–29 (VTIL…SILK), 39–58 (ILIR…LFAG), 71–93 (TVSV…PTYE), 108–130 (FLVP…MLLS), 137–156 (ILYL…VILL), and 176–198 (LMGL…SWFY).

It belongs to the UPF0056 (MarC) family.

The protein localises to the cell membrane. The chain is UPF0056 membrane protein bbp_399 from Buchnera aphidicola subsp. Baizongia pistaciae (strain Bp).